A 301-amino-acid polypeptide reads, in one-letter code: Homeobox protein Nkx-2.6 (301 aa).

A disordered region spans residues 22–135; sequence ERSCPAASPH…QPKARQRRKP (114 aa). Positions 132–191 form a DNA-binding region, homeobox; that stretch reads RRKPRVLFSQAQVLALERRFKQQRYLSAPEREHLASALQLTSTQVKIWFQNRRYKCKRQR.

Belongs to the NK-2 homeobox family.

It is found in the nucleus. In terms of biological role, acts as a transcriptional activator. In conjunction with NKX2-5, may play a role in both pharyngeal and cardiac embryonic development. The polypeptide is Homeobox protein Nkx-2.6 (NKX2-6) (Homo sapiens (Human)).